The chain runs to 165 residues: uncharacterized protein (165 aa).

A helical membrane pass occupies residues 20-40 (INLIASIVLWLLFVITVIGTF). N-linked (GlcNAc...) asparagine; by host glycosylation occurs at N51. A helical transmembrane segment spans residues 97–117 (VGIIVILIFMLMIIMNGFYQM).

The protein localises to the membrane. This is an uncharacterized protein from Acanthamoeba polyphaga (Amoeba).